The following is a 61-amino-acid chain: Outer membrane lipoprotein YnbE (61 aa).

The signal sequence occupies residues 1–16 (MKILLAALTSSFMLVG). Cys-17 carries the N-palmitoyl cysteine lipid modification. Residue Cys-17 is the site of S-diacylglycerol cysteine attachment.

The protein belongs to the lipoprotein YnbE family. Interacts with the C-terminal region of the probable phospholipid transport protein YdbH.

The protein resides in the cell outer membrane. In terms of biological role, involved in outer membrane lipid homeostasis. Interacts with the inner membrane protein YdbH to form a functional protein bridge connecting the inner and outer membranes of the cell. Is required for YdbH's function and may facilitate phospholipid transport through the periplasm. In Escherichia coli O6:H1 (strain CFT073 / ATCC 700928 / UPEC), this protein is Outer membrane lipoprotein YnbE (ynbE).